Consider the following 385-residue polypeptide: MSLQSIRYKRGMLQVLDQLQVPHVERYIPVSTAKEGWHVIKEMHVRGAPAIAIVAVLSLSIELTELMDHEKLSTEADEVEAYILEKLDYLVTSRPTAVNLSDAAIKLKTLVQKRKQIGDPKGKDLAEAYVEAAEKMLIDDAMDNHRLGDFGATWIVNNTPVGKEGKKVGVLTHCNTGSLATAGYGTALGVIRSLLASDKLEHAYCTETRPYNQGARLTAFELVHDKIPATLITDSMAASLLAQKGAGLAAIVVGADRVVANGDTANKIGTYQLAVLAKYHGVKFIVAAPRTTIDLRTKEGEDIIIEERAKSEVTRITGPRISDLGKNEENITLETVNIAAPGIDVWNPAFDVTPYDLIDAIVTEVGVAEKNADGLFQLEKLFGFP.

Catalysis depends on aspartate 256, which acts as the Proton donor.

It belongs to the eIF-2B alpha/beta/delta subunits family. MtnA subfamily.

The protein resides in the cytoplasm. The protein localises to the nucleus. The catalysed reaction is 5-(methylsulfanyl)-alpha-D-ribose 1-phosphate = 5-(methylsulfanyl)-D-ribulose 1-phosphate. Its pathway is amino-acid biosynthesis; L-methionine biosynthesis via salvage pathway; L-methionine from S-methyl-5-thio-alpha-D-ribose 1-phosphate: step 1/6. Its function is as follows. Catalyzes the interconversion of methylthioribose-1-phosphate (MTR-1-P) into methylthioribulose-1-phosphate (MTRu-1-P). The polypeptide is Methylthioribose-1-phosphate isomerase (Arthroderma otae (strain ATCC MYA-4605 / CBS 113480) (Microsporum canis)).